The primary structure comprises 325 residues: Histone-lysine N-methyltransferase ATXR4 (325 aa).

The N-terminal stretch at 1–30 (MSRLALNRYSRCFSRLKTLTTPLFFSSSAA) is a signal peptide. One can recognise an SET domain in the interval 42–295 (PPIRVGLTES…EGEELRICYI (254 aa)).

It belongs to the class V-like SAM-binding methyltransferase superfamily. Histone-lysine methyltransferase family. TRX/MLL subfamily.

The protein localises to the nucleus. The catalysed reaction is L-lysyl-[histone] + S-adenosyl-L-methionine = N(6)-methyl-L-lysyl-[histone] + S-adenosyl-L-homocysteine + H(+). Functionally, histone methyltransferase. The polypeptide is Histone-lysine N-methyltransferase ATXR4 (ATXR4) (Arabidopsis thaliana (Mouse-ear cress)).